We begin with the raw amino-acid sequence, 134 residues long: Protein YhfA (134 aa).

This chain is Protein YhfA (yhfA), found in Escherichia coli O157:H7.